The primary structure comprises 554 residues: 3-(3-hydroxy-phenyl)propionate/3-hydroxycinnamic acid hydroxylase (554 aa).

FAD contacts are provided by residues glutamine 17–lysine 46 and phenylalanine 285–aspartate 295.

The protein belongs to the PheA/TfdB FAD monooxygenase family. FAD serves as cofactor.

The catalysed reaction is 3-(3-hydroxyphenyl)propanoate + NADH + O2 + H(+) = 3-(2,3-dihydroxyphenyl)propanoate + NAD(+) + H2O. The enzyme catalyses (2E)-3-(3-hydroxyphenyl)prop-2-enoate + NADH + O2 + H(+) = (2E)-3-(2,3-dihydroxyphenyl)prop-2-enoate + NAD(+) + H2O. It functions in the pathway aromatic compound metabolism; 3-phenylpropanoate degradation. In terms of biological role, catalyzes the insertion of one atom of molecular oxygen into position 2 of the phenyl ring of 3-(3-hydroxyphenyl)propionate (3-HPP) and hydroxycinnamic acid (3HCI). The polypeptide is 3-(3-hydroxy-phenyl)propionate/3-hydroxycinnamic acid hydroxylase (Escherichia coli O139:H28 (strain E24377A / ETEC)).